The sequence spans 534 residues: Peptide chain release factor 3 (534 aa).

Residues 9–278 form the tr-type G domain; sequence ARRRTFAIIS…FFIEHAPPPQ (270 aa). GTP contacts are provided by residues 18–25, 86–90, and 140–143; these read SHPDAGKT, DTPGH, and NKLD.

It belongs to the TRAFAC class translation factor GTPase superfamily. Classic translation factor GTPase family. PrfC subfamily.

The protein resides in the cytoplasm. Functionally, increases the formation of ribosomal termination complexes and stimulates activities of RF-1 and RF-2. It binds guanine nucleotides and has strong preference for UGA stop codons. It may interact directly with the ribosome. The stimulation of RF-1 and RF-2 is significantly reduced by GTP and GDP, but not by GMP. This is Peptide chain release factor 3 from Xanthomonas oryzae pv. oryzae (strain PXO99A).